Consider the following 1015-residue polypeptide: PHD finger protein 20-like protein 1 (1015 aa).

Positions 11–71 (ITFEIGARLE…SNRLRPLERP (61 aa)) constitute a Tudor 1 domain. Residues K75 and K79 each participate in a glycyl lysine isopeptide (Lys-Gly) (interchain with G-Cter in SUMO2) cross-link. The Tudor 2 domain maps to 85 to 141 (FDFKAGEEVLARWTDCRYYPAKIEAINKEGTFTVQFYDGVIRCLKRMHIKAMPEDAK). Disordered regions lie at residues 183 to 206 (AKNKTGSKPRTSANSNKEKERDGG) and 309 to 367 (EQAI…KAPK). Polar residues-rich tracts occupy residues 186 to 197 (KTGSKPRTSANS) and 315 to 346 (KPQSQKKNEAVISSSANTQKPALLSSTLSSGK). Phosphoserine is present on S368. Disordered stretches follow at residues 389–455 (VINK…SSVP) and 478–513 (CGSEVTGSQAPDSSYPGGECPREEKEETPLFANPTS). A compositionally biased stretch (basic residues) spans 404–415 (PCKHSERRRRSQ). At S432 the chain carries Phosphoserine. Composition is skewed to polar residues over residues 443–453 (SISSQNQQESS) and 480–489 (SEVTGSQAPD). K530 is covalently cross-linked (Glycyl lysine isopeptide (Lys-Gly) (interchain with G-Cter in SUMO2)). Positions 539 to 565 (EKTSTAFGKRKEKDKERKEKRDKDHYK) are enriched in basic and acidic residues. Positions 539 to 585 (EKTSTAFGKRKEKDKERKEKRDKDHYKPKQKKKKKKKKKSKQHDYSD) are disordered. A compositionally biased stretch (basic residues) spans 566 to 579 (PKQKKKKKKKKKSK). A PHD-type zinc finger spans residues 681 to 729 (IVRCICELDEENGFMIQCEECLCWQHSVCMGLLEDSIPEQYICYICRDP). K849 participates in a covalent cross-link: Glycyl lysine isopeptide (Lys-Gly) (interchain with G-Cter in SUMO2). Polar residues predominate over residues 859–878 (HSYQKPQSFSQDCHSLTDPG). A disordered region spans residues 859-889 (HSYQKPQSFSQDCHSLTDPGSSDDDDVSSFE). A compositionally biased stretch (acidic residues) spans 879–889 (SSDDDDVSSFE). The residue at position 907 (K907) is an N6-acetyllysine.

As to quaternary structure, interacts with methylated DNMT1 (DNMT1K142me1). Interacts with SOX2.

It is found in the nucleus. Is a negative regulator of proteasomal degradation of a set of methylated proteins, including DNMT1 and SOX2. Involved in the maintainance of embryonic stem cells pluripotency, through the regulation of SOX2 levels. This is PHD finger protein 20-like protein 1 (Phf20l1) from Rattus norvegicus (Rat).